Reading from the N-terminus, the 68-residue chain is Large ribosomal subunit protein bL35 (68 aa).

It belongs to the bacterial ribosomal protein bL35 family.

In Rickettsia bellii (strain RML369-C), this protein is Large ribosomal subunit protein bL35.